The following is a 195-amino-acid chain: Early light-induced protein 1, chloroplastic (195 aa).

Residues 1–46 (MATASFNMQSVFAGGLTTRKINTNKLFSAGSFPNLKRNYPVGVRCM) constitute a chloroplast transit peptide. A disordered region spans residues 46-81 (MAEGGPTNEDSSPAPSTSAAQPLPKSPSPPPPMKPK). The segment covering 56-68 (SSPAPSTSAAQPL) has biased composition (low complexity). Over residues 69–79 (PKSPSPPPPMK) the composition is skewed to pro residues. Helical transmembrane passes span 104 to 124 (LAMV…ENVL), 131 to 151 (GVSW…VPLF), and 175 to 195 (FAML…GTLV).

The protein belongs to the ELIP/psbS family.

It localises to the plastid. Its subcellular location is the chloroplast thylakoid membrane. Prevents excess accumulation of free chlorophyll by inhibiting the entire chlorophyll biosynthesis pathway (e.g. 5-aminolevulinate synthesis and Mg-protoporphyrin IX chelatase activity), and hence prevent photooxidative stress. Probably involved in the integration of pigments into the mature light-harvesting pigment-protein complexes. Light-harvesting chlorophyll (LHC) a/b-binding protein required to ensure a high rate of chlorophyll accumulation during deetiolation in continuous high light. Involved in seed germination. May fulfill a photoprotective functions. This chain is Early light-induced protein 1, chloroplastic, found in Arabidopsis thaliana (Mouse-ear cress).